The following is a 67-amino-acid chain: Beta-defensin 36 (67 aa).

A signal peptide spans 1 to 22 (MKLLLLTLAALLLVSQLTPGDA). 3 disulfide bridges follow: cysteine 25–cysteine 52, cysteine 32–cysteine 46, and cysteine 36–cysteine 53.

Belongs to the beta-defensin family.

The protein localises to the secreted. Functionally, has antibacterial activity. This Mus musculus (Mouse) protein is Beta-defensin 36 (Defb36).